Here is a 367-residue protein sequence, read N- to C-terminus: Glutamate 5-kinase (367 aa).

Lys-10 lines the ATP pocket. Substrate contacts are provided by Ser-50, Asp-137, and Asn-149. Residues 169–170 and 211–217 each bind ATP; these read TD and TGGMATK. One can recognise a PUA domain in the interval 275-353; sequence AGEITVDDGA…QQISEILGYE (79 aa).

Belongs to the glutamate 5-kinase family.

The protein resides in the cytoplasm. It catalyses the reaction L-glutamate + ATP = L-glutamyl 5-phosphate + ADP. The protein operates within amino-acid biosynthesis; L-proline biosynthesis; L-glutamate 5-semialdehyde from L-glutamate: step 1/2. Its function is as follows. Catalyzes the transfer of a phosphate group to glutamate to form L-glutamate 5-phosphate. In Yersinia enterocolitica serotype O:8 / biotype 1B (strain NCTC 13174 / 8081), this protein is Glutamate 5-kinase.